The sequence spans 278 residues: Tryptophan synthase alpha chain (278 aa).

Residues Glu-50 and Asp-61 each act as proton acceptor in the active site.

This sequence belongs to the TrpA family. As to quaternary structure, tetramer of two alpha and two beta chains.

The catalysed reaction is (1S,2R)-1-C-(indol-3-yl)glycerol 3-phosphate + L-serine = D-glyceraldehyde 3-phosphate + L-tryptophan + H2O. Its pathway is amino-acid biosynthesis; L-tryptophan biosynthesis; L-tryptophan from chorismate: step 5/5. The alpha subunit is responsible for the aldol cleavage of indoleglycerol phosphate to indole and glyceraldehyde 3-phosphate. The chain is Tryptophan synthase alpha chain from Rhodopseudomonas palustris (strain BisA53).